The following is a 504-amino-acid chain: Anaerobic nitric oxide reductase transcription regulator NorR (504 aa).

A 4-aspartylphosphate modification is found at aspartate 57. Residues 187–416 (MIGLSPGMTQ…LEHAIHRAVV (230 aa)) form the Sigma-54 factor interaction domain. ATP is bound by residues 215–222 (GETGTGKE) and 278–287 (ADNGTLFLDE). Residues 479–498 (WAACARMLETDVANLHRLAK) constitute a DNA-binding region (H-T-H motif).

It participates in nitrogen metabolism; nitric oxide reduction. Functionally, required for the expression of anaerobic nitric oxide (NO) reductase, acts as a transcriptional activator for at least the norVW operon. Activation also requires sigma-54. The chain is Anaerobic nitric oxide reductase transcription regulator NorR from Escherichia coli O17:K52:H18 (strain UMN026 / ExPEC).